The sequence spans 96 residues: Co-chaperonin GroES (96 aa).

Belongs to the GroES chaperonin family. As to quaternary structure, heptamer of 7 subunits arranged in a ring. Interacts with the chaperonin GroEL.

It is found in the cytoplasm. Together with the chaperonin GroEL, plays an essential role in assisting protein folding. The GroEL-GroES system forms a nano-cage that allows encapsulation of the non-native substrate proteins and provides a physical environment optimized to promote and accelerate protein folding. GroES binds to the apical surface of the GroEL ring, thereby capping the opening of the GroEL channel. The sequence is that of Co-chaperonin GroES from Holospora obtusa.